Here is a 492-residue protein sequence, read N- to C-terminus: Differentially expressed in FDCP 8 homolog (492 aa).

Residues 38–51 show a composition bias toward gly residues; that stretch reads GLGGSGSTGSGSEA. Residues 38–62 form a disordered region; the sequence is GLGGSGSTGSGSEAGGSEESGPQGA. 2 consecutive Phorbol-ester/DAG-type zinc fingers follow at residues 161 to 214 and 400 to 453; these read PHHG…KRVC and DHIR…NMIC. Residues 468 to 492 are disordered; the sequence is RMKSTEDDDDDDDGVATDDDVTAAE. A compositionally biased stretch (acidic residues) spans 473–492; that stretch reads EDDDDDDDGVATDDDVTAAE.

Belongs to the DEF8 family.

This Drosophila melanogaster (Fruit fly) protein is Differentially expressed in FDCP 8 homolog.